Reading from the N-terminus, the 207-residue chain is Cytochrome bo(3) ubiquinol oxidase subunit 3 (207 aa).

At 1–26 the chain is on the cytoplasmic side; it reads MSSQVMHGAAHGHDHGHDDHHHDSGQ. Residues 27-47 traverse the membrane as a helical segment; it reads MTVLGFWLYLMTDCILFASLF. The Periplasmic segment spans residues 48 to 70; sequence ATYAVLSGSFAGGPSGHDIFQLD. Residues 71 to 91 traverse the membrane as a helical segment; it reads FVAVETLFLLLSSITFGFAML. Topologically, residues 92–99 are cytoplasmic; sequence KMFDGKKA. A helical transmembrane segment spans residues 100–120; that stretch reads GVLGWLAVTFLFGAGFIAMEI. Topologically, residues 121 to 141 are periplasmic; the sequence is YEFHHLIAEGFGPQRSGFLSG. Residues 142 to 162 traverse the membrane as a helical segment; it reads FFALVGTHGLHVTAGLIWMAI. Residues 163–185 lie on the Cytoplasmic side of the membrane; sequence MMYQINKHGITPTAKTRMSCLSL. Residues 186–206 traverse the membrane as a helical segment; it reads FWHFLDVVWICVFTVVYLLGV. Residue L207 is a topological domain, periplasmic.

It belongs to the cytochrome c oxidase subunit 3 family. In terms of assembly, heterooctamer of two A chains, two B chains, two C chains and two D chains.

The protein localises to the cell inner membrane. Cytochrome bo(3) ubiquinol terminal oxidase is the component of the aerobic respiratory chain of E.coli that predominates when cells are grown at high aeration. Has proton pump activity across the membrane in addition to electron transfer, pumping 2 protons/electron. The sequence is that of Cytochrome bo(3) ubiquinol oxidase subunit 3 (cyoC) from Pseudomonas putida (Arthrobacter siderocapsulatus).